The primary structure comprises 336 residues: Tyrosine phosphatase-like protein H1 (336 aa).

The 269-residue stretch at 27–295 (IKKEHHKLMK…EICYRVLCEA (269 aa)) folds into the Tyrosine-protein phosphatase domain.

Belongs to the protein-tyrosine phosphatase family.

This chain is Tyrosine phosphatase-like protein H1 (H1), found in Microplitis demolitor (Parasitoid wasp).